Reading from the N-terminus, the 1407-residue chain is DNA-directed RNA polymerase subunit beta' (1407 aa).

Residues cysteine 70, cysteine 72, cysteine 85, and cysteine 88 each coordinate Zn(2+). 3 residues coordinate Mg(2+): aspartate 460, aspartate 462, and aspartate 464. Residues cysteine 814, cysteine 888, cysteine 895, and cysteine 898 each coordinate Zn(2+).

It belongs to the RNA polymerase beta' chain family. The RNAP catalytic core consists of 2 alpha, 1 beta, 1 beta' and 1 omega subunit. When a sigma factor is associated with the core the holoenzyme is formed, which can initiate transcription. The cofactor is Mg(2+). Zn(2+) is required as a cofactor.

It carries out the reaction RNA(n) + a ribonucleoside 5'-triphosphate = RNA(n+1) + diphosphate. Its function is as follows. DNA-dependent RNA polymerase catalyzes the transcription of DNA into RNA using the four ribonucleoside triphosphates as substrates. In Salmonella choleraesuis (strain SC-B67), this protein is DNA-directed RNA polymerase subunit beta'.